The following is a 187-amino-acid chain: Elongation factor P (187 aa).

The protein belongs to the elongation factor P family.

Its subcellular location is the cytoplasm. The protein operates within protein biosynthesis; polypeptide chain elongation. Involved in peptide bond synthesis. Stimulates efficient translation and peptide-bond synthesis on native or reconstituted 70S ribosomes in vitro. Probably functions indirectly by altering the affinity of the ribosome for aminoacyl-tRNA, thus increasing their reactivity as acceptors for peptidyl transferase. This Brachyspira hyodysenteriae (strain ATCC 49526 / WA1) protein is Elongation factor P.